The following is a 387-amino-acid chain: N6-succino-2-amino-2'-deoxyadenylate synthase (387 aa).

S14 serves as the catalytic Proton acceptor. Residues S14, T15, G16, K17, and G18 each contribute to the ATP site. S14 serves as a coordination point for dGMP. Mg(2+) is bound at residue S14. Residue N40 coordinates dGMP. ATP contacts are provided by G42, H43, and T44. G42 provides a ligand contact to Mg(2+). The dGMP site is built by S125, T126, and R140. Residue Q207 coordinates ATP. Residue T222 coordinates dGMP. T293 contributes to the Mg(2+) binding site. L-aspartate-binding residues include T293, V294, and R299. ATP-binding residues include N324 and N327.

The protein belongs to the Caudovirales PurZ family. The cofactor is Mg(2+).

It catalyses the reaction dGMP + L-aspartate + ATP = (2S)-2-amino-2'-deoxyadenylo-succinate + ADP + phosphate + 2 H(+). It participates in purine metabolism. Its function is as follows. Involved in the synthesis of the atypical nucleotide dZTP (2-amino-2'-deoxyadenosine-5'-triphosphate). Catalyzes the condensation of aspartate with deoxyguanylate into dSMP (N6-succino-2-amino-2'-deoxyadenylate), which undergoes defumarylation and phosphorylation respectively by host PurB and guanylate/nucleoside diphosphate kinases to give dZTP. dZTP is integrated into the viral genome instead of adenine by the viral DNA polymerase. This Z-base probably completely replaces adenosine and forms a triple bond to the opposite T-base. The resulting non-standard viral DNA is called Z-genome. The chemically modified DNA is probably harder for the host bacteria to digest with nucleases or restriction enzymes. The protein is N6-succino-2-amino-2'-deoxyadenylate synthase of Acinetobacter phage SH-Ab 15497.